A 397-amino-acid polypeptide reads, in one-letter code: Acetate kinase 2 (397 aa).

Position 8 (asparagine 8) interacts with Mg(2+). Lysine 15 contributes to the ATP binding site. Arginine 89 is a binding site for substrate. Aspartate 146 functions as the Proton donor/acceptor in the catalytic mechanism. Residues 206–210 (HLGNG), 281–283 (DFR), and 329–333 (GVGEN) each bind ATP. Glutamate 380 provides a ligand contact to Mg(2+).

This sequence belongs to the acetokinase family. Homodimer. Requires Mg(2+) as cofactor. The cofactor is Mn(2+).

The protein resides in the cytoplasm. The enzyme catalyses acetate + ATP = acetyl phosphate + ADP. It functions in the pathway metabolic intermediate biosynthesis; acetyl-CoA biosynthesis; acetyl-CoA from acetate: step 1/2. In terms of biological role, catalyzes the formation of acetyl phosphate from acetate and ATP. Can also catalyze the reverse reaction. The protein is Acetate kinase 2 of Listeria monocytogenes serovar 1/2a (strain ATCC BAA-679 / EGD-e).